A 234-amino-acid polypeptide reads, in one-letter code: Thymidylate kinase (234 aa).

11-18 serves as a coordination point for ATP; it reads GLEGSGKT.

The protein belongs to the thymidylate kinase family.

It catalyses the reaction dTMP + ATP = dTDP + ADP. Phosphorylation of dTMP to form dTDP in both de novo and salvage pathways of dTTP synthesis. This is Thymidylate kinase from Wigglesworthia glossinidia brevipalpis.